A 578-amino-acid polypeptide reads, in one-letter code: A-type ATP synthase subunit A (578 aa).

228 to 235 (GPFGSGKT) provides a ligand contact to ATP.

Belongs to the ATPase alpha/beta chains family. As to quaternary structure, has multiple subunits with at least A(3), B(3), C, D, E, F, H, I and proteolipid K(x).

The protein resides in the cell membrane. It catalyses the reaction ATP + H2O + 4 H(+)(in) = ADP + phosphate + 5 H(+)(out). Functionally, component of the A-type ATP synthase that produces ATP from ADP in the presence of a proton gradient across the membrane. The A chain is the catalytic subunit. In Methanococcoides burtonii (strain DSM 6242 / NBRC 107633 / OCM 468 / ACE-M), this protein is A-type ATP synthase subunit A.